Reading from the N-terminus, the 481-residue chain is Aspartyl/glutamyl-tRNA(Asn/Gln) amidotransferase subunit B (481 aa).

Belongs to the GatB/GatE family. GatB subfamily. As to quaternary structure, heterotrimer of A, B and C subunits.

It carries out the reaction L-glutamyl-tRNA(Gln) + L-glutamine + ATP + H2O = L-glutaminyl-tRNA(Gln) + L-glutamate + ADP + phosphate + H(+). It catalyses the reaction L-aspartyl-tRNA(Asn) + L-glutamine + ATP + H2O = L-asparaginyl-tRNA(Asn) + L-glutamate + ADP + phosphate + 2 H(+). In terms of biological role, allows the formation of correctly charged Asn-tRNA(Asn) or Gln-tRNA(Gln) through the transamidation of misacylated Asp-tRNA(Asn) or Glu-tRNA(Gln) in organisms which lack either or both of asparaginyl-tRNA or glutaminyl-tRNA synthetases. The reaction takes place in the presence of glutamine and ATP through an activated phospho-Asp-tRNA(Asn) or phospho-Glu-tRNA(Gln). The sequence is that of Aspartyl/glutamyl-tRNA(Asn/Gln) amidotransferase subunit B from Pseudomonas fluorescens (strain SBW25).